The chain runs to 300 residues: Putative hydro-lyase Dshi_3152 (300 aa).

It belongs to the D-glutamate cyclase family.

This is Putative hydro-lyase Dshi_3152 from Dinoroseobacter shibae (strain DSM 16493 / NCIMB 14021 / DFL 12).